A 180-amino-acid polypeptide reads, in one-letter code: Lysine-specific demethylase 5C (180 aa).

The interval 116–159 (PEESLAYSSDAGEGAGHIPKVQGLLENGDSVTSPEKVATEEGSG) is disordered. Ser148 bears the Phosphoserine mark.

It belongs to the JARID1 histone demethylase family. As to quaternary structure, part of two distinct complexes, one containing E2F6, and the other containing REST. Interacts with ZMYND8. The cofactor is Fe(2+).

It is found in the nucleus. It carries out the reaction N(6),N(6),N(6)-trimethyl-L-lysyl(4)-[histone H3] + 3 2-oxoglutarate + 3 O2 = L-lysyl(4)-[histone H3] + 3 formaldehyde + 3 succinate + 3 CO2. Histone demethylase that specifically demethylates 'Lys-4' of histone H3, thereby playing a central role in histone code. Does not demethylate histone H3 'Lys-9', H3 'Lys-27', H3 'Lys-36', H3 'Lys-79' or H4 'Lys-20'. Demethylates trimethylated and dimethylated but not monomethylated H3 'Lys-4'. Participates in transcriptional repression of neuronal genes by recruiting histone deacetylases and REST at neuron-restrictive silencer elements. Represses the CLOCK-BMAL1 heterodimer-mediated transcriptional activation of the core clock component PER2. This is Lysine-specific demethylase 5C (KDM5C) from Cricetulus griseus (Chinese hamster).